A 359-amino-acid chain; its full sequence is Chorismate synthase (359 aa).

The NADP(+) site is built by Arg-48 and Arg-54. FMN-binding positions include 129-131 (RSS), 241-242 (NA), Gly-285, 300-304 (KPTSS), and Arg-326.

It belongs to the chorismate synthase family. In terms of assembly, homotetramer. Requires FMNH2 as cofactor.

The enzyme catalyses 5-O-(1-carboxyvinyl)-3-phosphoshikimate = chorismate + phosphate. Its pathway is metabolic intermediate biosynthesis; chorismate biosynthesis; chorismate from D-erythrose 4-phosphate and phosphoenolpyruvate: step 7/7. Functionally, catalyzes the anti-1,4-elimination of the C-3 phosphate and the C-6 proR hydrogen from 5-enolpyruvylshikimate-3-phosphate (EPSP) to yield chorismate, which is the branch point compound that serves as the starting substrate for the three terminal pathways of aromatic amino acid biosynthesis. This reaction introduces a second double bond into the aromatic ring system. This chain is Chorismate synthase, found in Afipia carboxidovorans (strain ATCC 49405 / DSM 1227 / KCTC 32145 / OM5) (Oligotropha carboxidovorans).